Reading from the N-terminus, the 299-residue chain is 4-diphosphocytidyl-2-C-methyl-D-erythritol kinase (299 aa).

Residue Lys22 is part of the active site. 108-118 (PVGAGLGGGSS) contributes to the ATP binding site. The active site involves Asp150.

This sequence belongs to the GHMP kinase family. IspE subfamily.

It catalyses the reaction 4-CDP-2-C-methyl-D-erythritol + ATP = 4-CDP-2-C-methyl-D-erythritol 2-phosphate + ADP + H(+). The protein operates within isoprenoid biosynthesis; isopentenyl diphosphate biosynthesis via DXP pathway; isopentenyl diphosphate from 1-deoxy-D-xylulose 5-phosphate: step 3/6. Functionally, catalyzes the phosphorylation of the position 2 hydroxy group of 4-diphosphocytidyl-2C-methyl-D-erythritol. The protein is 4-diphosphocytidyl-2-C-methyl-D-erythritol kinase of Desulfotalea psychrophila (strain LSv54 / DSM 12343).